The following is a 257-amino-acid chain: Molybdate-binding protein ModA (257 aa).

The signal sequence occupies residues Met1–Ala24. Molybdate contacts are provided by Ser36, Ser63, Ala149, Val176, and Tyr194.

This sequence belongs to the bacterial solute-binding protein ModA family. As to quaternary structure, the complex is composed of two ATP-binding proteins (ModC), two transmembrane proteins (ModB) and a solute-binding protein (ModA).

It is found in the periplasm. Its function is as follows. Part of the ABC transporter complex ModABC involved in the transport of molybdenum into the cell. Binds molybdate with high affinity in vitro and with a similar affinity in vivo. Binds tungstate with high affinity in vitro. Binds unnatural anion perrhenate with high affinity in vitro. Does not bind sulfate, phosphate, arsenate, selenate, chlorate, metavanadate, nitrate, perchlorate, permanganate or carbonate. The chain is Molybdate-binding protein ModA (modA) from Escherichia coli (strain K12).